A 551-amino-acid chain; its full sequence is Probable 4-coumarate--CoA ligase 2 (551 aa).

ATP contacts are provided by serine 205, serine 206, glycine 207, threonine 208, threonine 209, and lysine 213. Positions 253 and 257 each coordinate (E)-4-coumaroyl-AMP. Lysine 274 serves as a coordination point for CoA. Residues 276-346 form an SBD1 region; sequence EFVRFLDLIQ…RFKGKLIIKQ (71 aa). (E)-4-coumaroyl-AMP is bound by residues alanine 323, glutamine 346, glycine 347, and threonine 351. Residues glutamine 346, glycine 347, threonine 351, aspartate 430, and arginine 445 each coordinate ATP. Residues 347–409 are SBD2; sequence GYGATELSPA…IKGPNVMLGY (63 aa). (E)-4-coumaroyl-AMP-binding residues include lysine 447 and lysine 451. Residues lysine 453 and glycine 454 each contribute to the CoA site. Lysine 537 is a binding site for ATP.

This sequence belongs to the ATP-dependent AMP-binding enzyme family. The cofactor is Mg(2+).

It carries out the reaction (E)-4-coumarate + ATP + CoA = (E)-4-coumaroyl-CoA + AMP + diphosphate. The enzyme catalyses (E)-4-coumarate + ATP + H(+) = (E)-4-coumaroyl-AMP + diphosphate. The catalysed reaction is (E)-4-coumaroyl-AMP + CoA = (E)-4-coumaroyl-CoA + AMP + H(+). It functions in the pathway phytoalexin biosynthesis; 3,4',5-trihydroxystilbene biosynthesis; 3,4',5-trihydroxystilbene from trans-4-coumarate: step 1/2. Carboxylate--CoA ligase that may use 4-coumarate as substrate. Follows a two-step reaction mechanism, wherein the carboxylate substrate first undergoes adenylation by ATP, followed by a thioesterification in the presence of CoA to yield the final CoA thioester. In Dictyostelium discoideum (Social amoeba), this protein is Probable 4-coumarate--CoA ligase 2 (4cl2).